We begin with the raw amino-acid sequence, 88 residues long: Toxin ICK-12 (88 aa).

The N-terminal stretch at 1-19 (MKSIVYMLLFCTFTVVILG) is a signal peptide. 4 disulfides stabilise this stretch: Cys41–Cys55, Cys41–Cys78, Cys54–Cys67, and Cys81–Cys88.

Belongs to the neurotoxin 27 (Jztx-72) family. ICK-41 subfamily. Expressed by the venom gland.

The protein localises to the secreted. Functionally, probable neurotoxin with ion channel impairing activity. The polypeptide is Toxin ICK-12 (Trittame loki (Brush-footed trapdoor spider)).